The primary structure comprises 217 residues: E3 ubiquitin-protein ligase znrf2 (217 aa).

Disordered stretches follow at residues 1 to 27 and 63 to 111; these read MGAK…SATA and QFIS…ERST. Gly2 carries N-myristoyl glycine lipidation. Positions 68–100 are enriched in polar residues; sequence RTRSVGPSARPQSGINIPNSGAYSSADSGNSTP. Residues 174–215 form an RING-type; atypical zinc finger; the sequence is CAICLEELLQGDTIARLPCLCIYHKGCIDEWFEVNRSCPEHP.

Its subcellular location is the endosome membrane. It localises to the lysosome membrane. It is found in the presynaptic cell membrane. The catalysed reaction is S-ubiquitinyl-[E2 ubiquitin-conjugating enzyme]-L-cysteine + [acceptor protein]-L-lysine = [E2 ubiquitin-conjugating enzyme]-L-cysteine + N(6)-ubiquitinyl-[acceptor protein]-L-lysine.. The protein operates within protein modification; protein ubiquitination. Its function is as follows. May play a role in the establishment and maintenance of neuronal transmission and plasticity via its ubiquitin ligase activity. E3 ubiquitin ligases accept ubiquitin from an E2 ubiquitin-conjugating enzyme in the form of a thioester and then directly transfer the ubiquitin to targeted substrates. This chain is E3 ubiquitin-protein ligase znrf2 (znrf2), found in Danio rerio (Zebrafish).